A 367-amino-acid polypeptide reads, in one-letter code: snRNA-activating protein complex subunit 1 (367 aa).

Positions 1 to 168 (MGTPPGLQTD…EEFKDPSDRV (168 aa)) are SNAPC3-binding. The SNAPC4-binding stretch occupies residues 164–268 (PSDRVMKLIT…AESLAKIKSK (105 aa)). Disordered stretches follow at residues 228–254 (KDRK…QETE) and 278–367 (KSRR…KRKH). Basic and acidic residues predominate over residues 238-254 (KINDGEEKMEGNSQETE). 2 positions are modified to phosphoserine: serine 289 and serine 290. Polar residues predominate over residues 292-301 (CDSASGQGQV).

As to quaternary structure, part of the SNAPc complex composed of 5 subunits: SNAPC1, SNAPC2, SNAPC3, SNAPC4 and SNAPC5. SNAPC1 interacts with SNAPC3, SNAPC4 and TBP.

The protein resides in the nucleus. In terms of biological role, part of the SNAPc complex required for the transcription of both RNA polymerase II and III small-nuclear RNA genes. Binds to the proximal sequence element (PSE), a non-TATA-box basal promoter element common to these 2 types of genes. Recruits TBP and BRF2 to the U6 snRNA TATA box. The protein is snRNA-activating protein complex subunit 1 (SNAPC1) of Macaca fascicularis (Crab-eating macaque).